Reading from the N-terminus, the 567-residue chain is Nucleolus and neural progenitor protein (567 aa).

S265 carries the post-translational modification Phosphoserine. The segment at 437–457 is disordered; it reads SKHHLRQRRSQNKFLRRQRKP. Positions 442-460 are nuclear localization signal; sequence RQRRSQNKFLRRQRKPQRK.

Belongs to the nepro family.

The protein localises to the nucleus. The protein resides in the nucleolus. Its function is as follows. May play a role in cortex development as part of the Notch signaling pathway. Downstream of Notch may repress the expression of proneural genes and inhibit neuronal differentiation thereby maintaining neural progenitors. May also play a role in preimplentation embryo development. The protein is Nucleolus and neural progenitor protein of Homo sapiens (Human).